The sequence spans 492 residues: GlcNAc-binding protein A (492 aa).

An N-terminal signal peptide occupies residues 1–23 (MNKSSTKTLIALSMMAVSSGVSA). One can recognise a Chitin-binding type-4 domain in the interval 24-204 (HGYVSETNDG…AFYNVIDVKF (181 aa)). Positions 443–484 (AGTKVLAEDGNVYQCKEFPYSGYCVQWTETATNFAPGVGSDW) constitute a Chitin-binding type-3 domain.

Belongs to the GbpA family.

The protein localises to the secreted. In terms of biological role, probably interacts with GlcNAc residues. May promote attachment to both epithelial cell surfaces and chitin. The sequence is that of GlcNAc-binding protein A from Aliivibrio fischeri (strain ATCC 700601 / ES114) (Vibrio fischeri).